The chain runs to 154 residues: MICETVEEFAAALPPFSALAGLDLGDKTIGVAVSDRMRGVATPLETIRRKKFGLDASALLAIVEQREIAGIVLGLPRNMDGSEGPRCQSTRAFARNLSRLTEVAITFWDERLSTVAAEKALLEADTTRKRRSEVIDHVAAAYILQGALDRLRNL.

Belongs to the YqgF nuclease family.

It is found in the cytoplasm. In terms of biological role, could be a nuclease involved in processing of the 5'-end of pre-16S rRNA. The sequence is that of Putative pre-16S rRNA nuclease from Ruegeria pomeroyi (strain ATCC 700808 / DSM 15171 / DSS-3) (Silicibacter pomeroyi).